The sequence spans 65 residues: Large ribosomal subunit protein bL35 (65 aa).

The protein belongs to the bacterial ribosomal protein bL35 family.

The sequence is that of Large ribosomal subunit protein bL35 from Prochlorococcus marinus (strain MIT 9215).